The sequence spans 370 residues: N-acyl-L-amino acid amidohydrolase (370 aa).

It belongs to the peptidase M20 family. In terms of assembly, homotetramer. It depends on Co(2+) as a cofactor.

The enzyme catalyses an N-acyl-L-amino acid + H2O = an L-alpha-amino acid + a carboxylate. It carries out the reaction an N-acetyl-L-cysteine-S-conjugate + H2O = an S-substituted L-cysteine + acetate. Functionally, hydrolyzes most efficiently N-acetyl derivatives of aromatic amino acids but is also active on other amino acids. L-stereospecific. The chain is N-acyl-L-amino acid amidohydrolase (amaA) from Geobacillus stearothermophilus (Bacillus stearothermophilus).